Consider the following 1703-residue polypeptide: Mediator of RNA polymerase II transcription subunit 14 (1703 aa).

Residues 755 to 766 (LSQTADLATSSA) are compositionally biased toward polar residues. Residues 755 to 781 (LSQTADLATSSAGPLLRKDQKPRKRSA) are disordered.

It belongs to the Mediator complex subunit 14 family. Component of the Mediator complex. Interacts with CDKE-1, HDA19 and LUG. Interacts with PTAC12/HMR/PAP5 and PIF4. Expressed in roots, stems, developing embryos, young leaf primordia, shoot apical meristems, inflorescence meristems, tapetum in anthers, ovules and floral organ primordia, but not in mature organs.

It is found in the nucleus. Its function is as follows. Component of the Mediator complex, a coactivator involved in the regulated transcription of nearly all RNA polymerase II-dependent genes. Mediator functions as a bridge to convey information from gene-specific regulatory proteins to the basal RNA polymerase II transcription machinery. The Mediator complex, having a compact conformation in its free form, is recruited to promoters by direct interactions with regulatory proteins and serves for the assembly of a functional pre-initiation complex with RNA polymerase II and the general transcription factors. Binds to G-box (5'-CACGTG-3')-containing regions of target genes promoters (e.g. IAA29 and IAA19). Involved in defining the duration of cell proliferation. Element of a PIF4/HMR/MED14-dependent thermoresponsive process; required for thermomorphogenetic hypocotyl growth in response to daytime warm temperature elicitation by associating to the promoters of thermoresponsive growth-relevant genes (e.g. mainly involved in biosynthesis and signaling of the phytohormone auxin); this also process implies PIF4 and its transcriptional coactivator PTAC12/HMR/PAP5 to promote the expression of target genes. The chain is Mediator of RNA polymerase II transcription subunit 14 from Arabidopsis thaliana (Mouse-ear cress).